A 394-amino-acid chain; its full sequence is Acryloyl-CoA reductase (NADH) (394 aa).

FAD contacts are provided by residues 135–144 and 170–172; these read FALTEPNAGS and FIS. Serine 144 is a binding site for substrate. A substrate-binding site is contributed by 254–257; that stretch reads DGAR. FAD-binding positions include arginine 282, glutamine 293, and 350–354; that span reads QIHGG. The active-site Proton acceptor is the glutamate 377. Glycine 378 is a substrate binding site. 379–381 provides a ligand contact to FAD; the sequence is TSE.

Heterohexadecamer; tetramer of tetramers. Each tetramer is composed of 2 alpha (AcrC), a beta (AcrA) and a gamma (AcrB) subunit. The cofactor is FAD.

Its subcellular location is the cytoplasm. It carries out the reaction propanoyl-CoA + NAD(+) = acryloyl-CoA + NADH + H(+). Probable catalytic subunit of the acryloyl-CoA reductase complex involved in the pathway of L-alanine fermentation. Catalyzes the irreversible NADH-dependent formation of propionyl-CoA from acryloyl-CoA. It can also use 3-buten-2-one as substrate. The sequence is that of Acryloyl-CoA reductase (NADH) (acrC) from Anaerotignum propionicum (Clostridium propionicum).